We begin with the raw amino-acid sequence, 280 residues long: Octanoyltransferase LIP2p2, chloroplastic (280 aa).

Residues 1–34 (MVFSVATSSVTNPKLHHHHHLSDFNRNRVSTSLK) constitute a chloroplast transit peptide. One can recognise a BPL/LPL catalytic domain in the interval 81–270 (QECSDSLIIL…EFSEVFQLQM (190 aa)). Substrate is bound by residues 123-130 (RGGEVTYH), 191-193 (AIG), and 204-206 (GLA). Catalysis depends on cysteine 222, which acts as the Acyl-thioester intermediate.

Belongs to the LipB family. As to expression, expressed in roots, leaves, cauline leaves, stems, siliques and flowers.

The protein resides in the plastid. Its subcellular location is the chloroplast. It catalyses the reaction octanoyl-[ACP] + L-lysyl-[protein] = N(6)-octanoyl-L-lysyl-[protein] + holo-[ACP] + H(+). It participates in protein modification; protein lipoylation via endogenous pathway; protein N(6)-(lipoyl)lysine from octanoyl-[acyl-carrier-protein]: step 1/2. Functionally, catalyzes the transfer of endogenously produced octanoic acid from octanoyl-acyl-carrier-protein onto the lipoyl domains of lipoate-dependent enzymes. Lipoyl-ACP can also act as a substrate although octanoyl-ACP is likely to be the physiological substrate. Together with LIP1P is essential for de novo plastidial protein lipoylation during seed development. Acts redundantly with LIP2P. In Arabidopsis thaliana (Mouse-ear cress), this protein is Octanoyltransferase LIP2p2, chloroplastic.